An 88-amino-acid polypeptide reads, in one-letter code: Small ribosomal subunit protein bS20 (88 aa).

Positions 1–20 (MANHKSAEKRARQTIKRTER) are disordered.

Belongs to the bacterial ribosomal protein bS20 family.

Binds directly to 16S ribosomal RNA. The sequence is that of Small ribosomal subunit protein bS20 from Campylobacter fetus subsp. fetus (strain 82-40).